Reading from the N-terminus, the 247-residue chain is MSASVEIFSDSKTMVGAAGKRLASTIQSAVAARERALIVLTGGSSGIGLLRDLATRGQQIDWSRVHLFWGDERYVPKDDDERNEKQARVALLDHIDIPPSQVHPMPAGDGEFGNDLEAAALAYEQLLAAYAAPGYPTPNFDVHLMGMGPEGHINSLFPNTVAVRETSRMVVGVRNSPKPPPERITLTLNAIQRSREVWLMVSGTAKADAVAAAMGGAPSASIPAAGAVGLETTLWLLDEEAAAKIPG.

This sequence belongs to the glucosamine/galactosamine-6-phosphate isomerase family. 6-phosphogluconolactonase subfamily.

It catalyses the reaction 6-phospho-D-glucono-1,5-lactone + H2O = 6-phospho-D-gluconate + H(+). It functions in the pathway carbohydrate degradation; pentose phosphate pathway; D-ribulose 5-phosphate from D-glucose 6-phosphate (oxidative stage): step 2/3. Hydrolysis of 6-phosphogluconolactone to 6-phosphogluconate. The sequence is that of 6-phosphogluconolactonase (pgl) from Mycobacterium leprae (strain TN).